A 173-amino-acid polypeptide reads, in one-letter code: Lipid A deacylase PagL (173 aa).

A signal peptide spans 1-23; that stretch reads MKKLLPLAVLAALSSVHVASAQA. Over 25–28 the chain is Periplasmic; it reads DVSA. The chain crosses the membrane as a beta stranded span at residues 29 to 32; that stretch reads AVGA. Position 33 (Thr33) is a topological domain, periplasmic. The beta stranded transmembrane segment at 34–49 threads the bilayer; it reads GQSGMTYRLGLSWDWD. At 50 to 56 the chain is on the extracellular side; the sequence is KSWWQTS. The chain crosses the membrane as a beta stranded span at residues 57–71; it reads TGRLTGYWDAGYTYW. Topologically, residues 72-73 are periplasmic; it reads EG. The chain crosses the membrane as a beta stranded span at residues 74–89; it reads GDEGAGKHSLSFAPVF. Val90 is a topological domain (extracellular). Residues 91 to 93 traverse the membrane as a beta stranded segment; it reads YEF. The Periplasmic segment spans residues 94-95; sequence AG. A beta stranded transmembrane segment spans residues 96–98; that stretch reads DSI. The Extracellular segment spans residues 99-100; it reads KP. The chain crosses the membrane as a beta stranded span at residues 101-115; it reads FIEAGIGVAAFSGTR. Residues 116-117 lie on the Periplasmic side of the membrane; it reads VG. Residues 118–128 form a beta stranded membrane-spanning segment; it reads DQNLGSSLNFE. Residues 129–138 lie on the Extracellular side of the membrane; that stretch reads DRIGAGLKFA. Residues 139–148 form a beta stranded membrane-spanning segment; that stretch reads NGQSVGVRAI. Catalysis depends on charge relay system residues His149, Ser151, and Glu163. Topologically, residues 149-173 are periplasmic; the sequence is HYSNAGLKQPNDGIESYSLFYKIPI.

It belongs to the PagL family. Homodimer.

It localises to the cell outer membrane. The enzyme catalyses a 3-(acyloxy)acyl derivative of bacterial toxin + H2O = a 3-hydroxyacyl derivative of bacterial toxin + a fatty acid + H(+). With respect to regulation, decreased activity at low temperatures (15 or 21 degrees Celsius). Has lipid A 3-O-deacylase activity. Hydrolyzes the ester bond at the 3 position of lipid A, a bioactive component of lipopolysaccharide (LPS), thereby releasing the primary fatty acyl moiety. Lacks fatty acyl chain-length specificity as removes both 3-OH C10 and 3-OH C14 fatty acids from lipid A. The protein is Lipid A deacylase PagL of Pseudomonas aeruginosa (strain ATCC 15692 / DSM 22644 / CIP 104116 / JCM 14847 / LMG 12228 / 1C / PRS 101 / PAO1).